Consider the following 666-residue polypeptide: Spartin (666 aa).

M1 carries the post-translational modification N-acetylmethionine. Residues 16–94 form the MIT domain; the sequence is IREAYKKAFL…LQNVRTRLEI (79 aa). The disordered stretch occupies residues 124-156; sequence EKLPEPQSFSSAPQHAEVNGNTSTPSAGAVAAP. Over residues 146–156 the composition is skewed to low complexity; that stretch reads STPSAGAVAAP. Residues 190 to 380 form a ubiquitin-binding region (UBR) domain region; it reads DSGEFSSVGE…QLDQGNKDVR (191 aa). The LC3-interacting region (LIR); mediates interaction with MAP1LC3A AND MAP1LC3C motif lies at 193 to 200; the sequence is EFSSVGEE. The segment at 344–398 is disordered; sequence EENEFQIPGRTRPSSDQLKEASGTDVKQLDQGNKDVRHKGKRGKRAKDTSSEEVN. K362 participates in a covalent cross-link: Glycyl lysine isopeptide (Lys-Gly) (interchain with G-Cter in ubiquitin). Residues 379–388 show a composition bias toward basic residues; that stretch reads VRHKGKRGKR. One can recognise a Senescence domain in the interval 427–611; that stretch reads ILSGASWVSW…YNINNIGIKA (185 aa). The tract at residues 431-503 is required for localization to lipid droplets; that stretch reads ASWVSWGLVK…LVDGVCTVAN (73 aa). S470 carries the phosphoserine modification. The interval 636-666 is disordered; it reads RENQEGAANVNVRGEKDEQTKEVKEAKKKDK. The span at 648–666 shows a compositional bias: basic and acidic residues; the sequence is RGEKDEQTKEVKEAKKKDK.

As to quaternary structure, interacts with ITCH and WWP1. Interacts (via MIT domain) with IST1; leading to the recruitment of SPART to midbodies. Interacts with MAP1LC3A and MAP1LC3C. In terms of processing, ubiquitinated; ubiquitination does not require ITCH and WWP1. Ubiquitously expressed, with highest levels of expression detected in adipose tissue.

It is found in the cytoplasm. The protein resides in the midbody. The protein localises to the lipid droplet. Its function is as follows. Lipophagy receptor that plays an important role in lipid droplet (LD) turnover in motor neurons. Localizes to LDs and interacts with components of the autophagy machinery, such as MAP1LC3A/C proteins to deliver LDs to autophagosomes for degradation via lipophagy. Lipid transfer protein required for lipid droplet degradation, including by lipophagy. Can bind and transfer all lipid species found in lipid droplets, from phospholipids to triglycerides and sterol esters but the direction of lipid transfer by spartin and its cargos are unknown. May be implicated in endosomal trafficking, or microtubule dynamics, or both. Participates in cytokinesis. This is Spartin from Homo sapiens (Human).